A 407-amino-acid polypeptide reads, in one-letter code: Carbamoyl phosphate synthase small chain (407 aa).

The interval 1–205 is CPSase; sequence MTETTPKTAP…LQDGYGEQDA (205 aa). Ser60, Gly257, and Gly259 together coordinate L-glutamine. In terms of domain architecture, Glutamine amidotransferase type-1 spans 209–397; that stretch reads HVVALDFGVK…INLIRERKGQ (189 aa). Cys286 functions as the Nucleophile in the catalytic mechanism. Leu287, Gln290, Asn328, Gly330, and Phe331 together coordinate L-glutamine. Active-site residues include His370 and Glu372.

The protein belongs to the CarA family. As to quaternary structure, composed of two chains; the small (or glutamine) chain promotes the hydrolysis of glutamine to ammonia, which is used by the large (or ammonia) chain to synthesize carbamoyl phosphate. Tetramer of heterodimers (alpha,beta)4.

It catalyses the reaction hydrogencarbonate + L-glutamine + 2 ATP + H2O = carbamoyl phosphate + L-glutamate + 2 ADP + phosphate + 2 H(+). It carries out the reaction L-glutamine + H2O = L-glutamate + NH4(+). It functions in the pathway amino-acid biosynthesis; L-arginine biosynthesis; carbamoyl phosphate from bicarbonate: step 1/1. Its pathway is pyrimidine metabolism; UMP biosynthesis via de novo pathway; (S)-dihydroorotate from bicarbonate: step 1/3. Small subunit of the glutamine-dependent carbamoyl phosphate synthetase (CPSase). CPSase catalyzes the formation of carbamoyl phosphate from the ammonia moiety of glutamine, carbonate, and phosphate donated by ATP, constituting the first step of 2 biosynthetic pathways, one leading to arginine and/or urea and the other to pyrimidine nucleotides. The small subunit (glutamine amidotransferase) binds and cleaves glutamine to supply the large subunit with the substrate ammonia. This is Carbamoyl phosphate synthase small chain from Brucella canis (strain ATCC 23365 / NCTC 10854 / RM-666).